A 378-amino-acid chain; its full sequence is UPF0284 protein MK0224 (378 aa).

It belongs to the UPF0284 family.

The chain is UPF0284 protein MK0224 from Methanopyrus kandleri (strain AV19 / DSM 6324 / JCM 9639 / NBRC 100938).